The chain runs to 356 residues: Guanine nucleotide-binding protein alpha-2 subunit (356 aa).

Glycine 2 carries N-myristoyl glycine lipidation. Cysteine 4 carries the S-palmitoyl cysteine lipid modification. Residues 35 to 356 (REVKLLLLGA…LTNNLRDIVL (322 aa)) enclose the G-alpha domain. The segment at 38–51 (KLLLLGAGESGKST) is G1 motif. GTP contacts are provided by glutamate 46, serine 47, glycine 48, lysine 49, serine 50, threonine 51, aspartate 153, leucine 178, threonine 184, glycine 206, asparagine 272, lysine 273, aspartate 275, and alanine 329. Serine 50 is a Mg(2+) binding site. A G2 motif region spans residues 176 to 184 (DILRCRNKT). Threonine 184 lines the Mg(2+) pocket. The tract at residues 199-208 (YRIFDVGGQR) is G3 motif. Residues 268 to 275 (ILFLNKVD) are G4 motif. Residues 327-332 (TNATDV) form a G5 motif region.

The protein belongs to the G-alpha family. In terms of assembly, g proteins are composed of 3 units; alpha, beta and gamma. The alpha chain contains the guanine nucleotide binding site. The cofactor is Mg(2+).

Its function is as follows. Guanine nucleotide-binding proteins (G proteins) are involved as modulators or transducers in various transmembrane signaling systems. In Mycosarcoma maydis (Corn smut fungus), this protein is Guanine nucleotide-binding protein alpha-2 subunit (GPA2).